Consider the following 209-residue polypeptide: Small ribosomal subunit protein uS4 (209 aa).

Residues 99-164 enclose the S4 RNA-binding domain; the sequence is GRLDSVVYRM…QLRVKAALEA (66 aa).

It belongs to the universal ribosomal protein uS4 family. In terms of assembly, part of the 30S ribosomal subunit. Contacts protein S5. The interaction surface between S4 and S5 is involved in control of translational fidelity.

In terms of biological role, one of the primary rRNA binding proteins, it binds directly to 16S rRNA where it nucleates assembly of the body of the 30S subunit. Its function is as follows. With S5 and S12 plays an important role in translational accuracy. The protein is Small ribosomal subunit protein uS4 of Aromatoleum aromaticum (strain DSM 19018 / LMG 30748 / EbN1) (Azoarcus sp. (strain EbN1)).